Reading from the N-terminus, the 225-residue chain is Cytidylate kinase (225 aa).

11–19 (GPAAAGKST) serves as a coordination point for ATP.

The protein belongs to the cytidylate kinase family. Type 1 subfamily.

The protein localises to the cytoplasm. The enzyme catalyses CMP + ATP = CDP + ADP. It catalyses the reaction dCMP + ATP = dCDP + ADP. The polypeptide is Cytidylate kinase (Bacillus anthracis (strain A0248)).